The following is a 759-amino-acid chain: NADP-dependent malic enzyme (759 aa).

Residues 1–428 (MDDQLKQSAL…KLTEFVYKTN (428 aa)) are malic enzyme. The active-site Proton donor is Tyr-39. An N6-acetyllysine modification is found at Lys-56. Catalysis depends on Lys-94, which acts as the Proton acceptor. Residues Glu-136, Asp-137, and Asp-162 each coordinate a divalent metal cation. Residues 195–198 (AGAA), Asn-288, and Asn-320 contribute to the NADP(+) site. The tract at residues 429–759 (LFMKPIFSQA…AVVEAQTQPL (331 aa)) is phosphate acetyltransferase; required for oligomerization, inhibition by acetyl-CoA and activation by glutamate, aspartate, and glucose-6-phosphate.

The protein in the N-terminal section; belongs to the malic enzymes family. It in the C-terminal section; belongs to the phosphate acetyltransferase and butyryltransferase family. As to quaternary structure, homooligomer, possibly an octamer. Mg(2+) is required as a cofactor. The cofactor is Mn(2+).

It carries out the reaction (S)-malate + NADP(+) = pyruvate + CO2 + NADPH. It catalyses the reaction oxaloacetate + H(+) = pyruvate + CO2. Inhibited by 4 mM Mg(2+) and acetyl-CoA, competitively inhibited by fumarate and oxaloacetate. Activated by glutamate and aspartate, glucose-6-phosphate, acetyl-phosphate and 2 mM KCl. In terms of biological role, catalyzes the decarboxylation of malate to pyruvate. In vitro, shows malolactic enzyme activity in the presence of NADPH. However, it is unlikely that this activity is of relevance in E.coli, which produces little NADPH. The chain is NADP-dependent malic enzyme (maeB) from Escherichia coli (strain K12).